An 803-amino-acid chain; its full sequence is MITLTELKCLADAQSSYHILKPWWDVFWYYITLIMLLVAVLAGALQLTQSRVLCCLPCKVEFDNQCAVPWDLLKGSENASSNSGLLLPLPLRIQNDLHRQQYSYIDAVCYEKQLHWFAKFFPYLVLLHTLIFAACSNFWLHYPSTSSRLEHFVSILHKCFDSPWTTRALSETVAEQSVRPLKLSKSKTLLSTSGGSADIDASKQSLPYPQPGLESPGIESPTSSVLDKKEGEQAKAIFEKVKRFRLHVEQRDIIYRVYLKQIIVKVILFVLIITYVPYFLSYITLEIDCSIDVQAFTGYKRYQCVYSLAEIFKVLASFYVILVMLYGLTSSYSLWWMLRSSLKQYSFEALREKSNYSDIPDVKNDFAFILHLADQYDPLYSKRFSIFLSEVSENKLKQINLNNEWTVERLKSKLVKNSQDKVELHLFMLNGLPDNVFELTEMEVLSLELIPEVKLPAAVAQLVNLRELHVYHSSLVVDHPALAFLEENLRILRLKFTEMGKIPRWVFHLKNLKELYLSGCVLPEQLSSLHLEGFQDLKNLRTLYLKSSLSRIPQVVTDLLPSLQKLSLDNEGSKLVVLNNLKKMVNLKSLELLSCDLERIPHSIFSLNNLHELDLKENNLKTVEEIISFQHLPSLSCLKLWHNNIAYIPAQIGALSNLEQLFLGHNNIESLPLQLFLCTKLHYLDLSYNHLTFIPEEIQYLTNLQYFAVTNNNIEMLPDGLFQCKKLQCLLLGRNSLTDLSPLVGELSNLTHLELTGNYLETLPVELEGCQSLKRSCLIVEDSLLNSLPLPVAERLQTCLDKC.

The Cytoplasmic segment spans residues 1–25; that stretch reads MITLTELKCLADAQSSYHILKPWWD. The chain crosses the membrane as a helical span at residues 26–46; the sequence is VFWYYITLIMLLVAVLAGALQ. The Extracellular segment spans residues 47–119; the sequence is LTQSRVLCCL…YEKQLHWFAK (73 aa). 2 disulfides stabilise this stretch: cysteine 55/cysteine 304 and cysteine 109/cysteine 289. An N-linked (GlcNAc...) asparagine glycan is attached at asparagine 78. The helical transmembrane segment at 120–140 threads the bilayer; it reads FFPYLVLLHTLIFAACSNFWL. Residues 141–261 are Cytoplasmic-facing; it reads HYPSTSSRLE…DIIYRVYLKQ (121 aa). A phosphoserine mark is found at serine 186 and serine 196. Residues 262–282 traverse the membrane as a helical segment; the sequence is IIVKVILFVLIITYVPYFLSY. Residues 283–307 are Extracellular-facing; the sequence is ITLEIDCSIDVQAFTGYKRYQCVYS. A helical membrane pass occupies residues 308–328; sequence LAEIFKVLASFYVILVMLYGL. Residues 329–803 lie on the Cytoplasmic side of the membrane; the sequence is TSSYSLWWML…ERLQTCLDKC (475 aa). 15 LRR repeats span residues 415–439, 440–462, 464–486, 488–509, 511–532, 539–559, 562–582, 586–607, 609–630, 634–655, 657–678, 680–701, 703–724, 726–747, and 749–771; these read VKNS…VFEL, TEME…VAQL, NLRE…AFLE, NLRI…VFHL, NLKE…LHLE, NLRT…VTDL, SLQK…NNLK, NLKS…IFSL, NLHE…ISFQ, SLSC…IGAL, NLEQ…LFLC, KLHY…IQYL, NLQY…LFQC, KLQC…VGEL, and NLTH…EGCQ.

The protein belongs to the LRRC8 family. In terms of assembly, heterohexamer; oligomerizes with other LRRC8 proteins (LRRC8A, LRRC8C, LRRC8D and/or LRRC8E) to form a heterohexamer. In vivo, the subunit composition may depend primarily on expression levels, and heterooligomeric channels containing various proportions of the different LRRC8 proteins may coexist.

The protein resides in the cell membrane. It is found in the endoplasmic reticulum membrane. The enzyme catalyses chloride(in) = chloride(out). It catalyses the reaction iodide(out) = iodide(in). The catalysed reaction is taurine(out) = taurine(in). Non-essential component of the volume-regulated anion channel (VRAC, also named VSOAC channel), an anion channel required to maintain a constant cell volume in response to extracellular or intracellular osmotic changes. The VRAC channel conducts iodide better than chloride and can also conduct organic osmolytes like taurine. Channel activity requires LRRC8A plus at least one other family member (LRRC8B, LRRC8C, LRRC8D or LRRC8E); channel characteristics depend on the precise subunit composition. This chain is Volume-regulated anion channel subunit LRRC8B, found in Mus musculus (Mouse).